The primary structure comprises 129 residues: Small ribosomal subunit protein uS9 (129 aa).

The protein belongs to the universal ribosomal protein uS9 family.

This is Small ribosomal subunit protein uS9 from Nitratiruptor sp. (strain SB155-2).